Reading from the N-terminus, the 152-residue chain is Nucleoside diphosphate kinase (152 aa).

The ATP site is built by Lys-11, Phe-59, Arg-87, Thr-93, Arg-104, and Asn-114. His-117 acts as the Pros-phosphohistidine intermediate in catalysis.

It belongs to the NDK family. Homotetramer. The cofactor is Mg(2+).

The protein localises to the cytoplasm. The enzyme catalyses a 2'-deoxyribonucleoside 5'-diphosphate + ATP = a 2'-deoxyribonucleoside 5'-triphosphate + ADP. It catalyses the reaction a ribonucleoside 5'-diphosphate + ATP = a ribonucleoside 5'-triphosphate + ADP. Major role in the synthesis of nucleoside triphosphates other than ATP. The ATP gamma phosphate is transferred to the NDP beta phosphate via a ping-pong mechanism, using a phosphorylated active-site intermediate. This chain is Nucleoside diphosphate kinase, found in Prochlorococcus marinus (strain MIT 9515).